A 109-amino-acid chain; its full sequence is Iron-sulfur cluster assembly protein CyaY (109 aa).

Belongs to the frataxin family.

Involved in iron-sulfur (Fe-S) cluster assembly. May act as a regulator of Fe-S biogenesis. The sequence is that of Iron-sulfur cluster assembly protein CyaY from Verminephrobacter eiseniae (strain EF01-2).